The chain runs to 865 residues: NBPF family member NBPF11 (865 aa).

Residues 70–130 (MLRNERQFKE…RSLNEHLQAL (61 aa)) are a coiled coil. The tract at residues 161 to 200 (KLSPENDEDEDEDVQVEEDEKVLESSAPREVQKAEESKVP) is disordered. Acidic residues predominate over residues 165–181 (ENDEDEDEDVQVEEDEK). In terms of domain architecture, Olduvai 1 spans 165–259 (ENDEDEDEDV…GCQDALNILP (95 aa)). A compositionally biased stretch (basic and acidic residues) spans 190-200 (EVQKAEESKVP). Residues 339–401 (KSMLRNERQF…RSLNEHLQAL (63 aa)) are a coiled coil. 5 Olduvai domains span residues 436 to 528 (ENDN…HIIP), 529 to 617 (ENES…ATGP), 620 to 675 (SREL…VDMD), 676 to 767 (EIEK…PPCP), and 770 to 865 (SREL…SAAC). Disordered regions lie at residues 450–475 (AEKV…EDSL) and 520–567 (WEDA…GYST). 2 stretches are compositionally biased toward acidic residues: residues 530 to 539 (NESDDEEEEE) and 550 to 562 (ESEE…ESWD). Positions 829–865 (RGRGRKEGEEDQRRKEEGEEKKGKKIKTHHAPGSAAC) are disordered. Residues 833 to 850 (RKEGEEDQRRKEEGEEKK) show a composition bias toward basic and acidic residues.

It belongs to the NBPF family. As to expression, expressed in spinal cord.

The protein resides in the cytoplasm. The chain is NBPF family member NBPF11 from Homo sapiens (Human).